The chain runs to 207 residues: Large ribosomal subunit protein bL25 (207 aa).

The interval 171-207 (EEETVVTVSAPRAEEEPTTTEAPEPEAVHGKDEEPVE) is disordered. Over residues 196 to 207 (EAVHGKDEEPVE) the composition is skewed to basic and acidic residues.

Belongs to the bacterial ribosomal protein bL25 family. CTC subfamily. In terms of assembly, part of the 50S ribosomal subunit; part of the 5S rRNA/L5/L18/L25 subcomplex. Contacts the 5S rRNA. Binds to the 5S rRNA independently of L5 and L18.

This is one of the proteins that binds to the 5S RNA in the ribosome where it forms part of the central protuberance. The protein is Large ribosomal subunit protein bL25 of Listeria monocytogenes serotype 4b (strain F2365).